We begin with the raw amino-acid sequence, 91 residues long: Acylphosphatase (91 aa).

An Acylphosphatase-like domain is found at Cys5 to Leu91. Residues Arg20 and Asn38 contribute to the active site.

It belongs to the acylphosphatase family.

The enzyme catalyses an acyl phosphate + H2O = a carboxylate + phosphate + H(+). The chain is Acylphosphatase (acyP) from Vibrio cholerae serotype O1 (strain ATCC 39315 / El Tor Inaba N16961).